Consider the following 146-residue polypeptide: Hemoglobin subunit beta (146 aa).

N-acetylvaline is present on Val-1. The 145-residue stretch at 2-146 (HLTAEEKAAV…VATALAHKYH (145 aa)) folds into the Globin domain. The residue at position 12 (Thr-12) is a Phosphothreonine. At Ser-44 the chain carries Phosphoserine. Residue Lys-59 is modified to N6-acetyllysine. His-63 serves as a coordination point for heme b. N6-acetyllysine is present on Lys-82. A heme b-binding site is contributed by His-92. Position 93 is an S-nitrosocysteine (Cys-93). Position 144 is an N6-acetyllysine (Lys-144).

Belongs to the globin family. As to quaternary structure, heterotetramer of two alpha chains and two beta chains. As to expression, red blood cells.

Its function is as follows. Involved in oxygen transport from the lung to the various peripheral tissues. This is Hemoglobin subunit beta (HBB) from Mustela lutreola (European mink).